The following is a 378-amino-acid chain: Alkanesulfonate monooxygenase (378 aa).

This sequence belongs to the SsuD family.

The enzyme catalyses an alkanesulfonate + FMNH2 + O2 = an aldehyde + FMN + sulfite + H2O + 2 H(+). Catalyzes the desulfonation of aliphatic sulfonates. The chain is Alkanesulfonate monooxygenase from Bacillus velezensis (strain DSM 23117 / BGSC 10A6 / LMG 26770 / FZB42) (Bacillus amyloliquefaciens subsp. plantarum).